A 245-amino-acid chain; its full sequence is 2,3-bisphosphoglycerate-dependent phosphoglycerate mutase (245 aa).

Substrate-binding positions include 8–15, 21–22, Arg-60, 87–90, Lys-98, 114–115, and 183–184; these read RHGQSLWN, TG, ERHY, RR, and GN. His-9 serves as the catalytic Tele-phosphohistidine intermediate. Glu-87 acts as the Proton donor/acceptor in catalysis.

Belongs to the phosphoglycerate mutase family. BPG-dependent PGAM subfamily.

The enzyme catalyses (2R)-2-phosphoglycerate = (2R)-3-phosphoglycerate. The protein operates within carbohydrate degradation; glycolysis; pyruvate from D-glyceraldehyde 3-phosphate: step 3/5. Catalyzes the interconversion of 2-phosphoglycerate and 3-phosphoglycerate. This is 2,3-bisphosphoglycerate-dependent phosphoglycerate mutase from Bacillus mycoides (strain KBAB4) (Bacillus weihenstephanensis).